A 490-amino-acid chain; its full sequence is Actin-related protein 6 (490 aa).

The protein belongs to the actin family. ARP6 subfamily.

It localises to the cytoplasm. The protein localises to the cytoskeleton. The sequence is that of Actin-related protein 6 from Dictyostelium discoideum (Social amoeba).